The primary structure comprises 224 residues: 7-cyano-7-deazaguanine synthase (224 aa).

Residue 9–19 coordinates ATP; sequence ISGGMDSTLCA. Zn(2+)-binding residues include cysteine 190, cysteine 198, cysteine 201, and cysteine 204.

This sequence belongs to the QueC family. The cofactor is Zn(2+).

It catalyses the reaction 7-carboxy-7-deazaguanine + NH4(+) + ATP = 7-cyano-7-deazaguanine + ADP + phosphate + H2O + H(+). It functions in the pathway purine metabolism; 7-cyano-7-deazaguanine biosynthesis. In terms of biological role, catalyzes the ATP-dependent conversion of 7-carboxy-7-deazaguanine (CDG) to 7-cyano-7-deazaguanine (preQ(0)). The chain is 7-cyano-7-deazaguanine synthase from Campylobacter jejuni subsp. doylei (strain ATCC BAA-1458 / RM4099 / 269.97).